Consider the following 231-residue polypeptide: uncharacterized protein (231 aa).

Residues 4–116 enclose the Response regulatory domain; that stretch reads RILVVEDDED…ELHARVIAQL (113 aa). Asp52 carries the post-translational modification 4-aspartylphosphate. Residues 129-230 constitute a DNA-binding region (ompR/PhoB-type); that stretch reads EETFLIGGKL…EWGRGYRFGA (102 aa).

Post-translationally, phosphorylated by YrkQ.

It localises to the cytoplasm. Functionally, member of the two-component regulatory system YrkQ/YrkP. This is an uncharacterized protein from Bacillus subtilis (strain 168).